The sequence spans 184 residues: Homeobox protein LOX10 (184 aa).

Disordered regions lie at residues 1-29 and 129-184; these read KIVS…PLQH and YKTK…NKPG. The segment at residues 76–135 is a DNA-binding region (homeobox); it reads RRKRRILFSQAQIYELERRFRQQKYLSAPEREHLATFIGLTPTQVKIWFQNHRYKTKKSK. Low complexity-rich tracts occupy residues 140-161 and 174-184; these read NSPS…ASTT and SNTTNNNNKPG.

This sequence belongs to the NK-2 homeobox family. As to expression, expressed in a segmental pattern in the endoderm and in the cephalic nervous system.

It localises to the nucleus. Its function is as follows. May play a role in patterning the gut. The chain is Homeobox protein LOX10 (LOX10) from Helobdella triserialis (Leech).